The following is a 791-amino-acid chain: Cellobionic acid phosphorylase (791 aa).

Asp478 serves as the catalytic Proton donor.

The protein belongs to the glycosyl hydrolase 94 family. Cellobionic acid phosphorylase subfamily. Homodimer.

It carries out the reaction 4-O-beta-D-glucopyranosyl-D-gluconate + phosphate = D-gluconate + alpha-D-glucose 1-phosphate. The protein operates within glycan metabolism; cellulose degradation. In terms of biological role, catalyzes the reversible phosphorolysis of cellobionic acid (4-O-beta-D-glucopyranosyl-D-gluconate), a probable step in cellulose degradation. May be part of a metabolic pathway where cellobionic acid is converted into alpha-D-glucose 1-phosphate and D-gluconic acid to enter glycolysis and the pentose phosphate pathway, respectively. Produces 4-O-beta-D-glucopyranosyl-D-glucuronate from alpha-D-glucose 1-phosphate and D-glucuronate with low activity in the synthetic direction. This chain is Cellobionic acid phosphorylase, found in Neurospora crassa (strain ATCC 24698 / 74-OR23-1A / CBS 708.71 / DSM 1257 / FGSC 987).